A 565-amino-acid polypeptide reads, in one-letter code: CTP synthase (565 aa).

The interval 1–272 (MARPKNVKHI…DLRVMKKLGL (272 aa)) is amidoligase domain. CTP is bound at residue Ser18. Ser18 contacts UTP. Residue 19 to 24 (SLGKGI) coordinates ATP. Tyr59 serves as a coordination point for L-glutamine. Asp76 contacts ATP. Positions 76 and 146 each coordinate Mg(2+). CTP contacts are provided by residues 153 to 155 (DIE), 193 to 198 (KTKPTQ), and Lys229. UTP-binding positions include 193-198 (KTKPTQ) and Lys229. The Glutamine amidotransferase type-1 domain occupies 299 to 543 (TIGICGKYTE…VHAAKEFAQG (245 aa)). Position 363 (Gly363) interacts with L-glutamine. Cys390 acts as the Nucleophile; for glutamine hydrolysis in catalysis. L-glutamine is bound by residues 391–394 (LGMQ), Glu414, and Arg471. Active-site residues include His516 and Glu518.

This sequence belongs to the CTP synthase family. Homotetramer.

The enzyme catalyses UTP + L-glutamine + ATP + H2O = CTP + L-glutamate + ADP + phosphate + 2 H(+). It carries out the reaction L-glutamine + H2O = L-glutamate + NH4(+). It catalyses the reaction UTP + NH4(+) + ATP = CTP + ADP + phosphate + 2 H(+). Its pathway is pyrimidine metabolism; CTP biosynthesis via de novo pathway; CTP from UDP: step 2/2. With respect to regulation, allosterically activated by GTP, when glutamine is the substrate; GTP has no effect on the reaction when ammonia is the substrate. The allosteric effector GTP functions by stabilizing the protein conformation that binds the tetrahedral intermediate(s) formed during glutamine hydrolysis. Inhibited by the product CTP, via allosteric rather than competitive inhibition. In terms of biological role, catalyzes the ATP-dependent amination of UTP to CTP with either L-glutamine or ammonia as the source of nitrogen. Regulates intracellular CTP levels through interactions with the four ribonucleotide triphosphates. This is CTP synthase from Chlorobaculum tepidum (strain ATCC 49652 / DSM 12025 / NBRC 103806 / TLS) (Chlorobium tepidum).